The following is a 182-amino-acid chain: ATP-dependent protease subunit HslV (182 aa).

Thr-12 is a catalytic residue. Na(+) is bound by residues Ala-167, Cys-170, and Thr-173.

Belongs to the peptidase T1B family. HslV subfamily. In terms of assembly, a double ring-shaped homohexamer of HslV is capped on each side by a ring-shaped HslU homohexamer. The assembly of the HslU/HslV complex is dependent on binding of ATP.

Its subcellular location is the cytoplasm. It carries out the reaction ATP-dependent cleavage of peptide bonds with broad specificity.. Allosterically activated by HslU binding. Its function is as follows. Protease subunit of a proteasome-like degradation complex believed to be a general protein degrading machinery. The polypeptide is ATP-dependent protease subunit HslV (Chlorobium phaeobacteroides (strain BS1)).